Reading from the N-terminus, the 228-residue chain is SPbeta prophage-derived uncharacterized protein YomL (228 aa).

An N-terminal signal peptide occupies residues 1 to 28 (MRKKRVITCVMAASLTLGSLLPAGYATA).

This is SPbeta prophage-derived uncharacterized protein YomL (yomL) from Bacillus subtilis (strain 168).